Consider the following 859-residue polypeptide: Leucine--tRNA ligase (859 aa).

The short motif at 42–52 is the 'HIGH' region element; the sequence is PYPSGRLHMGH. Residues 618–622 carry the 'KMSKS' region motif; it reads KMSKS. Lysine 621 is a binding site for ATP.

Belongs to the class-I aminoacyl-tRNA synthetase family.

The protein resides in the cytoplasm. The catalysed reaction is tRNA(Leu) + L-leucine + ATP = L-leucyl-tRNA(Leu) + AMP + diphosphate. The sequence is that of Leucine--tRNA ligase from Shewanella sp. (strain ANA-3).